A 67-amino-acid chain; its full sequence is Amphipathic peptide Tx348 (67 aa).

A signal peptide spans M1–A23. The residue at position 33 (F33) is a Phenylalanine amide. Positions S37–Y67 are excised as a propeptide.

This sequence belongs to the non-disulfide-bridged peptide (NDBP) superfamily. Short antimicrobial peptide (group 4) family. As to expression, expressed by the venom gland.

It is found in the secreted. The protein resides in the target cell membrane. Functionally, amphipathic peptide that has antibacterial activities. This chain is Amphipathic peptide Tx348, found in Buthus israelis (Israeli scorpion).